The sequence spans 673 residues: Thimet-like oligopeptidase (673 aa).

His465 contacts Zn(2+). Residue Glu466 is part of the active site. Zn(2+) is bound by residues His469 and His472.

Belongs to the peptidase M3 family. The cofactor is Zn(2+).

In Dictyostelium discoideum (Social amoeba), this protein is Thimet-like oligopeptidase.